The sequence spans 5161 residues: Nonribosomal peptide synthetase TES (5161 aa).

The tract at residues 37-436 (EEQAIARPNA…GRKDSQTKVR (400 aa)) is adenylation 1. The 77-residue stretch at 569 to 645 (QPETEKEQIL…KLTSAAIPSV (77 aa)) folds into the Carrier 1 domain. S606 bears the O-(pantetheine 4'-phosphoryl)serine mark. Residues 659-1098 (GHVAQSFAQG…LLCDVELSKL (440 aa)) form a condensation 1 region. Positions 1122 to 1522 (RQQTSLCPSR…GRMDGQVKIR (401 aa)) are adenylation 2. Residues 1630–1742 (MNEWLDDTID…YLFKTTQQLL (113 aa)) form a methyltransferase (M) domain 1 region. Positions 2068 to 2141 (TRAESKIQQL…QLAAVAQEHV (74 aa)) constitute a Carrier 2 domain. S2102 is subject to O-(pantetheine 4'-phosphoryl)serine. Positions 2179–2593 (EDIYPCSPLQ…MLTQDDEQQL (415 aa)) are condensation 2. An adenylation 3 region spans residues 2614 to 3010 (DQAKSRPEAD…GRKDGQVKVR (397 aa)). In terms of domain architecture, Carrier 3 spans 3139 to 3215 (KPETKHEMAL…RLANRLVDPP (77 aa)). At S3176 the chain carries O-(pantetheine 4'-phosphoryl)serine. Positions 3232 to 3668 (LQSFAQGRLW…VVPLMTVEAH (437 aa)) are condensation 3. The tract at residues 3694-4098 (FRQQAAMQPS…GRIDGQVKIR (405 aa)) is adenylation 4. A methyltransferase (M) domain 2 region spans residues 4203 to 4329 (EMKEWLEETI…KVDGVKTLFF (127 aa)). The region spanning 4643–4725 (RELSTAELKV…QFSQHEGEQK (83 aa)) is the Carrier 4 domain. S4680 is subject to O-(pantetheine 4'-phosphoryl)serine. Positions 4785-5093 (FFLNLGTRVD…HQNLNEHPEF (309 aa)) are condensation 4.

Belongs to the NRP synthetase family.

Its pathway is phytotoxin biosynthesis. Nonribosomal peptide synthetase; part of the gene cluster that mediates the biosynthesis of the phytotoxin tentoxin, an inhibitor the F1-ATPase activity of chloroplasts, resulting in chlorosis in sensitive plants. Tentoxin is a cyclic tetrapeptide that consists of four amino acid residues: glycine (Gly), alanine (Ala), leucine (Leu), and dehydrophenylalanine (DPhe). In addition, both the Ala and DPhe residues are N-methylated. The nonribosomal peptide synthetase TES assembles tentoxin from the four substrate amino acids. The adenylation domains of each of the 4 modules are responsible for the activation of Gly, Ala, Leu and DPhe, respectively. In addition, the N-methyltransferase domains in the second and fourth modules of TES could be responsible for N-methylation of Ala and DPhe residues. Finally, the condensation domain located in the termination module probably catalyzes the formation of the intramolecular macrocyclization and then the release of tentoxin. The cytochrome P450 monooxygenase TES1 is predicted to be involved in the formation of DPhe. The sequence is that of Nonribosomal peptide synthetase TES from Alternaria alternata (Alternaria rot fungus).